We begin with the raw amino-acid sequence, 220 residues long: 26S proteasome non-ATPase regulatory subunit 9 (220 aa).

2 coiled-coil regions span residues 4–32 and 61–91; these read GTTT…GQIL and RLAR…YHSE. Residues 102-200 enclose the PDZ domain; it reads RASALDLDSD…QLDLILVPKT (99 aa).

It belongs to the proteasome subunit p27 family. As to quaternary structure, interacts with PI31; this interaction is increased by PI31 ADP-ribosylation. Interacts with Rpt5.

Its function is as follows. Acts as a chaperone during the assembly of the 26S proteasome, specifically of the base subcomplex of the PA700/19S regulatory complex (RC). The chain is 26S proteasome non-ATPase regulatory subunit 9 from Drosophila melanogaster (Fruit fly).